Here is a 201-residue protein sequence, read N- to C-terminus: Recombination protein RecR (201 aa).

The C4-type zinc finger occupies 60–75 (CRRCGNVDVCDPCTIC). Residues 83–178 (RTLVVVADVG…RVTRLAQGVP (96 aa)) enclose the Toprim domain.

This sequence belongs to the RecR family.

Functionally, may play a role in DNA repair. It seems to be involved in an RecBC-independent recombinational process of DNA repair. It may act with RecF and RecO. The protein is Recombination protein RecR of Xanthobacter autotrophicus (strain ATCC BAA-1158 / Py2).